The sequence spans 224 residues: Viral late gene transcription factor 3 (224 aa).

Belongs to the orthopoxvirus VLTF-3/OPG127 family. In terms of assembly, interacts with the late transcription elongation factor VLTF-4/OPG110. Interacts with the late transcription factors VLTF-1/OPG093.

Acts with RNA polymerase to initiate transcription from late gene promoters. The chain is Viral late gene transcription factor 3 (OPG127) from Monkeypox virus.